A 238-amino-acid polypeptide reads, in one-letter code: Small ribosomal subunit protein uS2c (238 aa).

This sequence belongs to the universal ribosomal protein uS2 family.

The protein resides in the plastid. The protein localises to the chloroplast. The chain is Small ribosomal subunit protein uS2c (rps2) from Nuphar advena (Common spatterdock).